We begin with the raw amino-acid sequence, 581 residues long: Chaperonin GroEL 1 (581 aa).

Residues 29-32 (TIGP), 86-90 (DGTTT), glycine 413, and aspartate 492 each bind ATP.

The protein belongs to the chaperonin (HSP60) family. Forms a cylinder of 14 subunits composed of two heptameric rings stacked back-to-back. Interacts with the co-chaperonin GroES.

It localises to the cytoplasm. The enzyme catalyses ATP + H2O + a folded polypeptide = ADP + phosphate + an unfolded polypeptide.. In terms of biological role, together with its co-chaperonin GroES, plays an essential role in assisting protein folding. The GroEL-GroES system forms a nano-cage that allows encapsulation of the non-native substrate proteins and provides a physical environment optimized to promote and accelerate protein folding. In Prochlorococcus marinus subsp. pastoris (strain CCMP1986 / NIES-2087 / MED4), this protein is Chaperonin GroEL 1.